A 932-amino-acid polypeptide reads, in one-letter code: Protocadherin gamma-A3 (932 aa).

The first 29 residues, Met-1 to Gly-29, serve as a signal peptide directing secretion. 6 Cadherin domains span residues Gln-30–Phe-133, Pro-134–Phe-242, Thr-243–Ile-347, Thr-348–Phe-452, Pro-453–Ile-562, and Asp-570–Ala-682. The Extracellular segment spans residues Gln-30 to Tyr-692. N-linked (GlcNAc...) asparagine glycosylation is found at Asn-265, Asn-419, and Asn-545. N-linked (GlcNAc...) asparagine glycosylation occurs at Asn-685. A helical membrane pass occupies residues Leu-693–Ala-713. Residues His-714–Lys-932 are Cytoplasmic-facing. 2 disordered regions span residues Leu-806–Asn-841 and Ala-902–Lys-932. Over residues Asn-922–Lys-932 the composition is skewed to basic residues.

Its subcellular location is the cell membrane. Functionally, potential calcium-dependent cell-adhesion protein. May be involved in the establishment and maintenance of specific neuronal connections in the brain. The chain is Protocadherin gamma-A3 (PCDHGA3) from Pan troglodytes (Chimpanzee).